The primary structure comprises 262 residues: MEILLVNDDGIYSNGLLALKNVICEEFDANVTVVAPTNQQSGIGRAISLFEPLRITKTKLADCSEGYAVSGTPTDCVVLGVHQVLKKVPDYIISGINIGENLGTEITTSGTLGAAFEGAHHGAKSFACSLQVTTDHLKFKEGESPIEFMTAARIVKNVFKKFLDDEFPCDVVNINVPDNATENTPVEITKLAKRMYSMHVEERIDPRSRSYYWLDGYPVMDEEDGTDVYAVRNKRNVSVTPLTLDNTAKNIDEFKEKYGKKF.

The a divalent metal cation site is built by D8, D9, S41, and N97.

Belongs to the SurE nucleotidase family. A divalent metal cation serves as cofactor.

It is found in the cytoplasm. It carries out the reaction a ribonucleoside 5'-phosphate + H2O = a ribonucleoside + phosphate. In terms of biological role, nucleotidase that shows phosphatase activity on nucleoside 5'-monophosphates. This Methanococcus maripaludis (strain DSM 14266 / JCM 13030 / NBRC 101832 / S2 / LL) protein is 5'-nucleotidase SurE.